We begin with the raw amino-acid sequence, 108 residues long: Somatoliberin (108 aa).

Positions 1–20 (MPLWVFFFVILTLSNSSHCS) are cleaved as a signal peptide. Residues 21 to 31 (PPPPLTLRMRR) constitute a propeptide that is removed on maturation. The residue at position 75 (Leu75) is a Leucine amide. Positions 78–108 (QVDSMWAEQKQMELESILVALLQKHSRNSQG) are excised as a propeptide.

The protein belongs to the glucagon family.

The protein localises to the secreted. Functionally, GRF is released by the hypothalamus and acts on the adenohypophyse to stimulate the secretion of growth hormone. The polypeptide is Somatoliberin (GHRH) (Homo sapiens (Human)).